The sequence spans 153 residues: Endoribonuclease YbeY (153 aa).

The Zn(2+) site is built by His-116, His-120, and His-126.

This sequence belongs to the endoribonuclease YbeY family. Requires Zn(2+) as cofactor.

The protein localises to the cytoplasm. Functionally, single strand-specific metallo-endoribonuclease involved in late-stage 70S ribosome quality control and in maturation of the 3' terminus of the 16S rRNA. The polypeptide is Endoribonuclease YbeY (Clavibacter michiganensis subsp. michiganensis (strain NCPPB 382)).